A 769-amino-acid polypeptide reads, in one-letter code: MNTKLTKIISGLFVATAAFQTASAGNITDIKVSSLPNKQKIVKVSFDKEIVNPTGFVTSSPARIALDFEQTGISMDQQVLEYADPLLSKISAAQNSSRARLVLNLNKPGQYNTEVRGNKVWIFINESDDTVSAPARPAVKAAPAAPAKQQAAAPSTKSAVSVSEPFTPAKQQAAAPFTESVVSVSAPFSPAKQQAAASAKQQAAAPAKQQAAAPAKQQAAAPAKQTNIDFRKDGKNAGIIELAALGFAGQPDISQQHDHIIVTLKNHTLPTTLQRSLDVADFKTPVQKVTLKRLNNDTQLIITTAGNWELVNKSAAPGYFTFQVLPKKQNLESGGVNNAPKTFTGRKISLDFQDVEIRTILQILAKESGMNIVASDSVNGKMTLSLKDVPWDQALDLVMQARNLDMRQQGNIVNIAPRDELLAKDKALLQAEKDIADLGALYSQNFQLKYKNVEEFRSILRLDNADTTGNRNTLISGRGSVLIDPATNTLIVTDTRSVIEKFRKLIDELDVPAQQVMIEARIVEAADGFSRDLGVKFGATGKKKLKNDTSAFGWGVNSGFGGDDKWGAETKINLPITAAANSISLVRAISSGALNLELSASESLSKTKTLANPRVLTQNRKEAKIESGYEIPFTVTSIANGGSSTNTELKKAVLGLTVTPNITPDGQIIMTVKINKDSPAQCASGNQTILCISTKNLNTQAMVENGGTLIVGGIYEEDNGNTLTKVPLLGDIPVIGNLFKTRGKKTDRRELLIFITPRIMGTAGNSLRY.

The first 24 residues, 1–24 (MNTKLTKIISGLFVATAAFQTASA), serve as a signal peptide directing secretion. 2 stretches are compositionally biased toward low complexity: residues 135–154 (ARPAVKAAPAAPAKQQAAAP) and 197–225 (ASAKQQAAAPAKQQAAAPAKQQAAAPAKQ). Disordered stretches follow at residues 135-156 (ARPAVKAAPAAPAKQQAAAPST) and 197-228 (ASAKQQAAAPAKQQAAAPAKQQAAAPAKQTNI).

The protein belongs to the bacterial secretin family. PilQ subfamily. In terms of assembly, homododecamer. Tetramer of trimer.

The protein resides in the cell outer membrane. Functionally, required for type IV pilus biogenesis and competence. Could function as a pore for exit of the pilus but also as a channel for entry of heme and antimicrobial agents and uptake of transforming DNA. In Neisseria meningitidis serogroup B (strain ATCC BAA-335 / MC58), this protein is Type IV pilus biogenesis and competence protein PilQ (pilQ).